Here is a 416-residue protein sequence, read N- to C-terminus: Enolase (416 aa).

A (2R)-2-phosphoglycerate-binding site is contributed by Gln156. The active-site Proton donor is the Glu200. Mg(2+) contacts are provided by Asp236, Glu281, and Asp308. (2R)-2-phosphoglycerate-binding residues include Lys333, Arg362, Ser363, and Lys384. Lys333 serves as the catalytic Proton acceptor.

This sequence belongs to the enolase family. Requires Mg(2+) as cofactor.

Its subcellular location is the cytoplasm. It is found in the secreted. The protein resides in the cell surface. The enzyme catalyses (2R)-2-phosphoglycerate = phosphoenolpyruvate + H2O. It functions in the pathway carbohydrate degradation; glycolysis; pyruvate from D-glyceraldehyde 3-phosphate: step 4/5. Catalyzes the reversible conversion of 2-phosphoglycerate (2-PG) into phosphoenolpyruvate (PEP). It is essential for the degradation of carbohydrates via glycolysis. This Methanothermobacter thermautotrophicus (strain ATCC 29096 / DSM 1053 / JCM 10044 / NBRC 100330 / Delta H) (Methanobacterium thermoautotrophicum) protein is Enolase.